The sequence spans 101 residues: MRGNVPQLKDVVLHLTPQTEIDLQCYEQFDSSEEEDEVDNMRDQLPERRAGQATCYRIEAPCCRCSSVVQLAVESSGDTLRVVQQMLMGELSLVCPCCANN.

The segment at 1-43 (MRGNVPQLKDVVLHLTPQTEIDLQCYEQFDSSEEEDEVDNMRD) is E7 terminal domain. The LXCXE motif; interaction with host RB1 and TMEM173/STING motif lies at 23–27 (LQCYE). Residues 62 to 98 (CCRCSSVVQLAVESSGDTLRVVQQMLMGELSLVCPCC) fold into a zinc finger. Residues 80-88 (LRVVQQMLM) carry the Nuclear export signal motif.

This sequence belongs to the papillomaviridae E7 protein family. As to quaternary structure, homodimer. Homooligomer. Interacts with host RB1; this interaction induces dissociation of RB1-E2F1 complex thereby disrupting RB1 activity. Interacts with host EP300; this interaction represses EP300 transcriptional activity. Interacts with protein E2; this interaction inhibits E7 oncogenic activity. Interacts with host TMEM173/STING; this interaction impairs the ability of TMEM173/STING to sense cytosolic DNA and promote the production of type I interferon (IFN-alpha and IFN-beta). Highly phosphorylated.

The protein resides in the host cytoplasm. It is found in the host nucleus. In terms of biological role, plays a role in viral genome replication by driving entry of quiescent cells into the cell cycle. Stimulation of progression from G1 to S phase allows the virus to efficiently use the cellular DNA replicating machinery to achieve viral genome replication. E7 protein has both transforming and trans-activating activities. Induces the disassembly of the E2F1 transcription factor from RB1, with subsequent transcriptional activation of E2F1-regulated S-phase genes. Interferes with host histone deacetylation mediated by HDAC1 and HDAC2, leading to transcription activation. Also plays a role in the inhibition of both antiviral and antiproliferative functions of host interferon alpha. Interaction with host TMEM173/STING impairs the ability of TMEM173/STING to sense cytosolic DNA and promote the production of type I interferon (IFN-alpha and IFN-beta). This Homo sapiens (Human) protein is Protein E7.